Here is a 172-residue protein sequence, read N- to C-terminus: Acetolactate synthase small subunit (172 aa).

In terms of domain architecture, ACT spans 4 to 79 (IITLTVVNRS…DVLKVTDITN (76 aa)).

The protein belongs to the acetolactate synthase small subunit family. Dimer of large and small chains.

It catalyses the reaction 2 pyruvate + H(+) = (2S)-2-acetolactate + CO2. It participates in amino-acid biosynthesis; L-isoleucine biosynthesis; L-isoleucine from 2-oxobutanoate: step 1/4. The protein operates within amino-acid biosynthesis; L-valine biosynthesis; L-valine from pyruvate: step 1/4. The sequence is that of Acetolactate synthase small subunit (ilvH) from Bacillus subtilis (strain 168).